Here is a 376-residue protein sequence, read N- to C-terminus: Fibromodulin (376 aa).

Residues 1–18 form the signal peptide; sequence MQWASILLLRGLCSLSQG. The residue at position 19 (Q19) is a Pyrrolidone carboxylic acid. Y20, Y38, Y53, Y55, Y63, and Y65 each carry sulfotyrosine. Positions 67 to 105 constitute an LRRNT domain; that stretch reads APPPPEPRDCPQECDCPPNFPTAMYCDNRNLKYLPFVPS. 8 LRR repeats span residues 106-127, 130-143, 156-176, 177-198, 201-222, 224-245, 246-266, and 269-289; these read RMKY…VFDN, GLLW…QITS, HLER…PLPR, SLRE…ALEG, NLTA…MRGL, SLIL…LPSA, LEQL…YFRG, and KLLY…ATNT. N127 carries N-linked (GlcNAc...) (keratan sulfate) asparagine glycosylation. N166 carries N-linked (GlcNAc...) (keratan sulfate) asparagine glycosylation. The N-linked (GlcNAc...) (keratan sulfate) asparagine glycan is linked to N201. Residue N291 is glycosylated (N-linked (GlcNAc...) (keratan sulfate) asparagine). LRR repeat units follow at residues 294 to 315 and 316 to 335; these read SLLE…NTNL and ENLY…SFCT. The cysteines at positions 334 and 367 are disulfide-linked. N-linked (GlcNAc...) asparagine glycosylation occurs at N341. Residues 344–367 form an LRR 11 repeat; sequence KLQVLRLDGNEIKRSAMPVDAPLC.

Belongs to the small leucine-rich proteoglycan (SLRP) family. SLRP class II subfamily. Binds to type I and type II collagen. Post-translationally, binds keratan sulfate chains.

The protein resides in the secreted. Its subcellular location is the extracellular space. It localises to the extracellular matrix. In terms of biological role, affects the rate of fibrils formation. May have a primary role in collagen fibrillogenesis. The sequence is that of Fibromodulin (Fmod) from Rattus norvegicus (Rat).